We begin with the raw amino-acid sequence, 183 residues long: Glutathione-regulated potassium-efflux system ancillary protein KefG (183 aa).

Belongs to the NAD(P)H dehydrogenase (quinone) family. KefG subfamily. As to quaternary structure, interacts with KefB.

It is found in the cell inner membrane. The enzyme catalyses a quinone + NADH + H(+) = a quinol + NAD(+). It carries out the reaction a quinone + NADPH + H(+) = a quinol + NADP(+). In terms of biological role, regulatory subunit of a potassium efflux system that confers protection against electrophiles. Required for full activity of KefB. The polypeptide is Glutathione-regulated potassium-efflux system ancillary protein KefG (Salmonella paratyphi B (strain ATCC BAA-1250 / SPB7)).